The sequence spans 76 residues: Cytochrome c oxidase subunit 6C-1 (76 aa).

Residues 2 to 10 are Mitochondrial matrix-facing; the sequence is SLAKPAMRG. A helical transmembrane segment spans residues 11 to 51; the sequence is LLGKRLRFHLPIAFTLSLVAALGFKYGVTEPRKQAYADFYK. Residues 52–76 lie on the Mitochondrial intermembrane side of the membrane; sequence QYDAVKDFNAMREAGIFESVRPSGE.

Belongs to the cytochrome c oxidase subunit 6c family. In terms of assembly, component of the cytochrome c oxidase (complex IV, CIV), a multisubunit enzyme composed of 14 subunits. The complex is composed of a catalytic core of 3 subunits MT-CO1, MT-CO2 and MT-CO3, encoded in the mitochondrial DNA, and 11 supernumerary subunits COX4I, COX5A, COX5B, COX6A, COX6B, COX6C, COX7A, COX7B, COX7C, COX8 and NDUFA4, which are encoded in the nuclear genome. The complex exists as a monomer or a dimer and forms supercomplexes (SCs) in the inner mitochondrial membrane with NADH-ubiquinone oxidoreductase (complex I, CI) and ubiquinol-cytochrome c oxidoreductase (cytochrome b-c1 complex, complex III, CIII), resulting in different assemblies (supercomplex SCI(1)III(2)IV(1) and megacomplex MCI(2)III(2)IV(2)).

It is found in the mitochondrion inner membrane. It participates in energy metabolism; oxidative phosphorylation. Its function is as follows. Component of the cytochrome c oxidase, the last enzyme in the mitochondrial electron transport chain which drives oxidative phosphorylation. The respiratory chain contains 3 multisubunit complexes succinate dehydrogenase (complex II, CII), ubiquinol-cytochrome c oxidoreductase (cytochrome b-c1 complex, complex III, CIII) and cytochrome c oxidase (complex IV, CIV), that cooperate to transfer electrons derived from NADH and succinate to molecular oxygen, creating an electrochemical gradient over the inner membrane that drives transmembrane transport and the ATP synthase. Cytochrome c oxidase is the component of the respiratory chain that catalyzes the reduction of oxygen to water. Electrons originating from reduced cytochrome c in the intermembrane space (IMS) are transferred via the dinuclear copper A center (CU(A)) of subunit 2 and heme A of subunit 1 to the active site in subunit 1, a binuclear center (BNC) formed by heme A3 and copper B (CU(B)). The BNC reduces molecular oxygen to 2 water molecules using 4 electrons from cytochrome c in the IMS and 4 protons from the mitochondrial matrix. This chain is Cytochrome c oxidase subunit 6C-1, found in Thunnus obesus (Bigeye tuna).